Consider the following 30-residue polypeptide: Large ribosomal subunit protein bL25 (30 aa).

It belongs to the bacterial ribosomal protein bL25 family. As to quaternary structure, part of the 50S ribosomal subunit; part of the 5S rRNA/L5/L18/L25 subcomplex. Contacts the 5S rRNA. Binds to the 5S rRNA independently of L5 and L18.

This is one of the proteins that binds to the 5S RNA in the ribosome where it forms part of the central protuberance. This chain is Large ribosomal subunit protein bL25 (rplY), found in Anabaena variabilis.